A 412-amino-acid polypeptide reads, in one-letter code: Alpha-1-antitrypsin 1-3 (412 aa).

The first 24 residues, 1–24 (MTPSISWGLLLLAGLCCLVPSFLA), serve as a signal peptide directing secretion. N-linked (GlcNAc...) asparagine glycans are attached at residues Asn64, Asn101, and Asn265. The tract at residues 368 to 387 (AVTVLLAVPYSMPPILRFDH) is RCL.

The protein belongs to the serpin family.

Its subcellular location is the secreted. In terms of biological role, inhibitor of serine proteases. Can inhibit trypsin and chymotrypsin; relatively ineffective against elastase. The chain is Alpha-1-antitrypsin 1-3 (Serpina1c) from Mus musculus (Mouse).